A 1286-amino-acid chain; its full sequence is DNA-directed RNA polymerase 147 kDa polypeptide (1286 aa).

It belongs to the poxviridae DNA-directed RNA polymerase 147 kDa subunit family. The DNA-dependent RNA polymerase used for intermediate and late genes expression consists of eight subunits Rpo30/OPG66, Rpo7/OPG90, Rpo22/OPG103, Rpo147/OPG105, Rpo18/OPG119, Rpo19/OPG131, Rpo132/OPG151 and Rpo35/OPG156. The same holoenzyme, with the addition of the transcription-specificity factor OPG109, is used for early gene expression.

The protein localises to the virion. It carries out the reaction RNA(n) + a ribonucleoside 5'-triphosphate = RNA(n+1) + diphosphate. Part of the DNA-dependent RNA polymerase which catalyzes the transcription of viral DNA into RNA using the four ribonucleoside triphosphates as substrates. Responsible for the transcription of early, intermediate and late genes. DNA-dependent RNA polymerase associates with the early transcription factor (ETF), itself composed of OPG118 and OPG133, thereby allowing the early genes transcription. Late transcription, and probably also intermediate transcription, require newly synthesized RNA polymerase. The sequence is that of DNA-directed RNA polymerase 147 kDa polypeptide (OPG105) from Monkeypox virus.